The sequence spans 719 residues: DNA replication licensing factor MCM7 (719 aa).

Position 2 is an N-acetylalanine (A2). Residues K15 and K28 each participate in a glycyl lysine isopeptide (Lys-Gly) (interchain with G-Cter in SUMO2) cross-link. Phosphoserine occurs at positions 121 and 314. The MCM domain maps to 332–538; sequence FYEKLAASIA…NDLRLAQHIT (207 aa). Y345 is a binding site for ATP. A Phosphoserine modification is found at S365. The ATP site is built by G384, A386, K387, S388, and N489. A Phosphoserine modification is found at S500. Positions 513–516 match the Arginine finger motif; the sequence is SRFD. R514 is an ATP binding site. Positions 521–564 are interaction with RAD17; it reads IQDRPDRDNDLRLAQHITYVHQHSRQPPAQFEPLDMKLMRRYIA. Positions 577–719 are interaction with ATRIP; the sequence is LADYITAAYV…NTARTRITFV (143 aa). Residue R604 coordinates ATP. At S678 the chain carries Phosphoserine.

The protein belongs to the MCM family. Component of the MCM2-7 complex. The complex forms a toroidal hexameric ring with the proposed subunit order MCM2-MCM6-MCM4-MCM7-MCM3-MCM5. Component of the CMG helicase complex, a hexameric ring of related MCM2-7 subunits stabilized by CDC45 and the tetrameric GINS complex. Interacts with the ATR-ATRIP complex and with RAD17. Interacts with TIPIN. Interacts with MCMBP. Interacts with ANKRD17. Component of the replisome complex composed of at least DONSON, MCM2, MCM7, PCNA and TICRR. In terms of processing, O-glycosylated (O-GlcNAcylated), in a cell cycle-dependent manner. Post-translationally, ubiquitinated by ECS(LRR1) E3 ubiquitin-protein ligase complex when forks converge following formation of DNA interstrand cross-links. During mitosis, ubiquitinated by TRAIP when forks converge following formation of DNA interstrand cross-links. Short ubiquitin chains on MCM7 promote recruitment of DNA glycosylase NEIL3. If the interstrand cross-link cannot be cleaved by NEIL3, the ubiquitin chains continue to grow on MCM7, promoting the unloading of the CMG helicase complex by the VCP/p97 ATPase.

It is found in the nucleus. Its subcellular location is the chromosome. It carries out the reaction ATP + H2O = ADP + phosphate + H(+). Functionally, acts as a component of the MCM2-7 complex (MCM complex) which is the replicative helicase essential for 'once per cell cycle' DNA replication initiation and elongation in eukaryotic cells. Core component of CDC45-MCM-GINS (CMG) helicase, the molecular machine that unwinds template DNA during replication, and around which the replisome is built. The active ATPase sites in the MCM2-7 ring are formed through the interaction surfaces of two neighboring subunits such that a critical structure of a conserved arginine finger motif is provided in trans relative to the ATP-binding site of the Walker A box of the adjacent subunit. The six ATPase active sites, however, are likely to contribute differentially to the complex helicase activity. Required for S-phase checkpoint activation upon UV-induced damage. The sequence is that of DNA replication licensing factor MCM7 (MCM7) from Bos taurus (Bovine).